The following is a 320-amino-acid chain: L-lactate dehydrogenase 2 (320 aa).

NAD(+) is bound by residues 18–19 (AV), D40, and R45. Residues Q88, R94, and 126–129 (NPVD) contribute to the substrate site. Residues 124-126 (ITN) and S149 each bind NAD(+). 154–157 (DSAR) serves as a coordination point for substrate. Beta-D-fructose 1,6-bisphosphate is bound by residues R159 and 171-176 (KNVHAY). H181 acts as the Proton acceptor in catalysis. The residue at position 228 (Y228) is a Phosphotyrosine. T237 contributes to the substrate binding site.

Belongs to the LDH/MDH superfamily. LDH family. In terms of assembly, homotetramer.

It localises to the cytoplasm. The catalysed reaction is (S)-lactate + NAD(+) = pyruvate + NADH + H(+). It functions in the pathway fermentation; pyruvate fermentation to lactate; (S)-lactate from pyruvate: step 1/1. Its activity is regulated as follows. Allosterically activated by fructose 1,6-bisphosphate (FBP). In terms of biological role, catalyzes the conversion of lactate to pyruvate. This is L-lactate dehydrogenase 2 from Bifidobacterium longum subsp. longum (strain ATCC 15707 / DSM 20219 / JCM 1217 / NCTC 11818 / E194b).